The primary structure comprises 80 residues: Small ribosomal subunit protein bS18 (80 aa).

It belongs to the bacterial ribosomal protein bS18 family. In terms of assembly, part of the 30S ribosomal subunit. Forms a tight heterodimer with protein bS6.

Binds as a heterodimer with protein bS6 to the central domain of the 16S rRNA, where it helps stabilize the platform of the 30S subunit. This Acholeplasma laidlawii (strain PG-8A) protein is Small ribosomal subunit protein bS18.